We begin with the raw amino-acid sequence, 257 residues long: Acyl-[acyl-carrier-protein]--UDP-N-acetylglucosamine O-acyltransferase (257 aa).

It belongs to the transferase hexapeptide repeat family. LpxA subfamily. As to quaternary structure, homotrimer.

The protein localises to the cytoplasm. It carries out the reaction a (3R)-hydroxyacyl-[ACP] + UDP-N-acetyl-alpha-D-glucosamine = a UDP-3-O-[(3R)-3-hydroxyacyl]-N-acetyl-alpha-D-glucosamine + holo-[ACP]. It functions in the pathway glycolipid biosynthesis; lipid IV(A) biosynthesis; lipid IV(A) from (3R)-3-hydroxytetradecanoyl-[acyl-carrier-protein] and UDP-N-acetyl-alpha-D-glucosamine: step 1/6. Involved in the biosynthesis of lipid A, a phosphorylated glycolipid that anchors the lipopolysaccharide to the outer membrane of the cell. This is Acyl-[acyl-carrier-protein]--UDP-N-acetylglucosamine O-acyltransferase from Anaeromyxobacter dehalogenans (strain 2CP-1 / ATCC BAA-258).